A 204-amino-acid polypeptide reads, in one-letter code: Quinol oxidase subunit 3 (204 aa).

The next 6 membrane-spanning stretches (helical) occupy residues 27 to 47 (FWIFLGAEIVLFSTLFATFFV), 66 to 86 (LVMIMTFLLLISSFTCGIAVH), 95 to 115 (GVVIWTIITLLLGAGFVGCEI), 118 to 138 (FVHYVHEGAALSTSAFWSGFF), 140 to 160 (LLGTHGTHVTIGIFWITGILI), and 184 to 204 (FLDVVWIFIFTGVYLMGLGGL).

The protein belongs to the cytochrome c oxidase subunit 3 family.

It is found in the cell membrane. The catalysed reaction is 2 a quinol + O2 = 2 a quinone + 2 H2O. Functionally, catalyzes quinol oxidation with the concomitant reduction of oxygen to water. Major component for energy conversion during vegetative growth. The polypeptide is Quinol oxidase subunit 3 (qoxC) (Bacillus subtilis (strain 168)).